The following is a 270-amino-acid chain: 5'-nucleotidase SurE (270 aa).

Residues Asp-8, Asp-9, Ser-40, and Asn-98 each coordinate a divalent metal cation.

The protein belongs to the SurE nucleotidase family. A divalent metal cation serves as cofactor.

It is found in the cytoplasm. The catalysed reaction is a ribonucleoside 5'-phosphate + H2O = a ribonucleoside + phosphate. In terms of biological role, nucleotidase that shows phosphatase activity on nucleoside 5'-monophosphates. In Cyanothece sp. (strain PCC 7425 / ATCC 29141), this protein is 5'-nucleotidase SurE.